Reading from the N-terminus, the 378-residue chain is 3-dehydroquinate synthase (378 aa).

NAD(+) contacts are provided by residues 115–119, 139–140, lysine 152, and lysine 161; these read GVVGD and TS. Zn(2+) is bound by residues glutamate 194, histidine 256, and histidine 275.

It belongs to the sugar phosphate cyclases superfamily. Dehydroquinate synthase family. Co(2+) is required as a cofactor. Zn(2+) serves as cofactor. Requires NAD(+) as cofactor.

It is found in the cytoplasm. The catalysed reaction is 7-phospho-2-dehydro-3-deoxy-D-arabino-heptonate = 3-dehydroquinate + phosphate. Its pathway is metabolic intermediate biosynthesis; chorismate biosynthesis; chorismate from D-erythrose 4-phosphate and phosphoenolpyruvate: step 2/7. Functionally, catalyzes the conversion of 3-deoxy-D-arabino-heptulosonate 7-phosphate (DAHP) to dehydroquinate (DHQ). The chain is 3-dehydroquinate synthase from Brucella suis (strain ATCC 23445 / NCTC 10510).